A 213-amino-acid polypeptide reads, in one-letter code: Pyridoxine/pyridoxamine 5'-phosphate oxidase (213 aa).

FMN-binding positions include 60 to 65, 75 to 76, K82, and Q104; these read RMVLMK and YS. K65 provides a ligand contact to substrate. Positions 122, 126, and 130 each coordinate substrate. Residues 139–140 and W184 contribute to the FMN site; that span reads QS. 190–192 lines the substrate pocket; the sequence is RLH. R194 is an FMN binding site.

The protein belongs to the pyridoxamine 5'-phosphate oxidase family. In terms of assembly, homodimer. FMN serves as cofactor.

It carries out the reaction pyridoxamine 5'-phosphate + O2 + H2O = pyridoxal 5'-phosphate + H2O2 + NH4(+). The enzyme catalyses pyridoxine 5'-phosphate + O2 = pyridoxal 5'-phosphate + H2O2. It participates in cofactor metabolism; pyridoxal 5'-phosphate salvage; pyridoxal 5'-phosphate from pyridoxamine 5'-phosphate: step 1/1. The protein operates within cofactor metabolism; pyridoxal 5'-phosphate salvage; pyridoxal 5'-phosphate from pyridoxine 5'-phosphate: step 1/1. Functionally, catalyzes the oxidation of either pyridoxine 5'-phosphate (PNP) or pyridoxamine 5'-phosphate (PMP) into pyridoxal 5'-phosphate (PLP). The polypeptide is Pyridoxine/pyridoxamine 5'-phosphate oxidase (Rhodopseudomonas palustris (strain BisB18)).